A 283-amino-acid chain; its full sequence is D-alanine aminotransferase (283 aa).

Y32 contributes to the substrate binding site. Position 51 (R51) interacts with pyridoxal 5'-phosphate. The substrate site is built by R99 and H101. K146 serves as the catalytic Proton acceptor. The residue at position 146 (K146) is an N6-(pyridoxal phosphate)lysine. E178 serves as a coordination point for pyridoxal 5'-phosphate.

It belongs to the class-IV pyridoxal-phosphate-dependent aminotransferase family. In terms of assembly, homodimer. Pyridoxal 5'-phosphate serves as cofactor.

The enzyme catalyses D-alanine + 2-oxoglutarate = D-glutamate + pyruvate. Functionally, acts on the D-isomers of alanine, leucine, aspartate, glutamate, aminobutyrate, norvaline and asparagine. The enzyme transfers an amino group from a substrate D-amino acid to the pyridoxal phosphate cofactor to form pyridoxamine and an alpha-keto acid in the first half-reaction. The second half-reaction is the reverse of the first, transferring the amino group from the pyridoxamine to a second alpha-keto acid to form the product D-amino acid via a ping-pong mechanism. This is an important process in the formation of D-alanine and D-glutamate, which are essential bacterial cell wall components. This chain is D-alanine aminotransferase (dat), found in Lysinibacillus sphaericus (Bacillus sphaericus).